The primary structure comprises 569 residues: Proline--tRNA ligase (569 aa).

Belongs to the class-II aminoacyl-tRNA synthetase family. ProS type 1 subfamily. In terms of assembly, homodimer.

It localises to the cytoplasm. It catalyses the reaction tRNA(Pro) + L-proline + ATP = L-prolyl-tRNA(Pro) + AMP + diphosphate. Functionally, catalyzes the attachment of proline to tRNA(Pro) in a two-step reaction: proline is first activated by ATP to form Pro-AMP and then transferred to the acceptor end of tRNA(Pro). As ProRS can inadvertently accommodate and process non-cognate amino acids such as alanine and cysteine, to avoid such errors it has two additional distinct editing activities against alanine. One activity is designated as 'pretransfer' editing and involves the tRNA(Pro)-independent hydrolysis of activated Ala-AMP. The other activity is designated 'posttransfer' editing and involves deacylation of mischarged Ala-tRNA(Pro). The misacylated Cys-tRNA(Pro) is not edited by ProRS. The polypeptide is Proline--tRNA ligase (Nitratiruptor sp. (strain SB155-2)).